A 155-amino-acid chain; its full sequence is Nascent polypeptide-associated complex subunit beta (155 aa).

2 disordered regions span residues 1–35 (MDQA…SGAD) and 116–155 (LAES…SNVE). The segment covering 20-30 (TPRRKVKKVHK) has biased composition (basic residues). One can recognise an NAC-A/B domain in the interval 33-98 (GADDKKLQAT…GEEKELTELV (66 aa)). Residues 136-155 (DEEDDIPDLVEGENFESNVE) are compositionally biased toward acidic residues.

It belongs to the NAC-beta family. Part of the nascent polypeptide-associated complex (NAC), consisting of egd2 and egd1. NAC associates with ribosomes via egd1.

The protein resides in the cytoplasm. Its subcellular location is the nucleus. Functionally, component of the nascent polypeptide-associated complex (NAC), a dynamic component of the ribosomal exit tunnel, protecting the emerging polypeptides from interaction with other cytoplasmic proteins to ensure appropriate nascent protein targeting. The NAC complex also promotes mitochondrial protein import by enhancing productive ribosome interactions with the outer mitochondrial membrane and blocks the inappropriate interaction of ribosomes translating non-secretory nascent polypeptides with translocation sites in the membrane of the endoplasmic reticulum. EGD1 may act as a transcription factor that exert a negative effect on the expression of several genes that are transcribed by RNA polymerase II. This is Nascent polypeptide-associated complex subunit beta (egd1) from Aspergillus niger (strain ATCC MYA-4892 / CBS 513.88 / FGSC A1513).